Here is a 73-residue protein sequence, read N- to C-terminus: Large ribosomal subunit protein uL29 (73 aa).

This sequence belongs to the universal ribosomal protein uL29 family.

The sequence is that of Large ribosomal subunit protein uL29 from Synechococcus sp. (strain JA-2-3B'a(2-13)) (Cyanobacteria bacterium Yellowstone B-Prime).